A 368-amino-acid chain; its full sequence is Phosphate acyltransferase (368 aa).

Positions 334–368 (EGSLEQAARDASGAGHASPIAGQPAEPYAAQSSKA) are disordered.

It belongs to the PlsX family. Homodimer. Probably interacts with PlsY.

It localises to the cytoplasm. The catalysed reaction is a fatty acyl-[ACP] + phosphate = an acyl phosphate + holo-[ACP]. Its pathway is lipid metabolism; phospholipid metabolism. Catalyzes the reversible formation of acyl-phosphate (acyl-PO(4)) from acyl-[acyl-carrier-protein] (acyl-ACP). This enzyme utilizes acyl-ACP as fatty acyl donor, but not acyl-CoA. The protein is Phosphate acyltransferase of Paraburkholderia xenovorans (strain LB400).